Reading from the N-terminus, the 160-residue chain is Transcription elongation factor GreA (160 aa).

Residues 2–81 are a coiled coil; that stretch reads AEKKNILTYE…KNAEVVVEDE (80 aa). Residues 36 to 55 form a disordered region; that stretch reads KEAREQGDLSENAEYDAAKD.

It belongs to the GreA/GreB family.

Functionally, necessary for efficient RNA polymerase transcription elongation past template-encoded arresting sites. The arresting sites in DNA have the property of trapping a certain fraction of elongating RNA polymerases that pass through, resulting in locked ternary complexes. Cleavage of the nascent transcript by cleavage factors such as GreA or GreB allows the resumption of elongation from the new 3'terminus. GreA releases sequences of 2 to 3 nucleotides. This is Transcription elongation factor GreA from Lachnoclostridium phytofermentans (strain ATCC 700394 / DSM 18823 / ISDg) (Clostridium phytofermentans).